The sequence spans 71 residues: Large ribosomal subunit protein uL30 (71 aa).

This sequence belongs to the universal ribosomal protein uL30 family. As to quaternary structure, part of the 50S ribosomal subunit.

This is Large ribosomal subunit protein uL30 from Mycobacterium leprae (strain TN).